Reading from the N-terminus, the 154-residue chain is Ribonuclease H (154 aa).

The RNase H type-1 domain maps to 1 to 142 (MTKQVEIFTD…CDELARQGAN (142 aa)). Mg(2+) is bound by residues aspartate 10, glutamate 48, aspartate 70, and aspartate 134.

It belongs to the RNase H family. In terms of assembly, monomer. The cofactor is Mg(2+).

It is found in the cytoplasm. It catalyses the reaction Endonucleolytic cleavage to 5'-phosphomonoester.. Endonuclease that specifically degrades the RNA of RNA-DNA hybrids. The polypeptide is Ribonuclease H (Yersinia pestis bv. Antiqua (strain Antiqua)).